The following is an 86-amino-acid chain: Small ribosomal subunit protein bS16 (86 aa).

This sequence belongs to the bacterial ribosomal protein bS16 family.

This chain is Small ribosomal subunit protein bS16, found in Leptothrix cholodnii (strain ATCC 51168 / LMG 8142 / SP-6) (Leptothrix discophora (strain SP-6)).